Consider the following 473-residue polypeptide: B box and SPRY domain-containing protein (473 aa).

Positions 1-69 (MSADVSGTES…PKQGSERSQL (69 aa)) are disordered. The segment covering 35 to 51 (KPGPGPEPRPESGPEPG) has biased composition (pro residues). The B box-type zinc-finger motif lies at 65-113 (ERSQLCPEHFEPLSWFCLSERRPVCATCAGFGGRCHRHRIRRAEEHAEE). The B30.2/SPRY domain maps to 259–455 (SPLLTQLWAA…ISIVRGPLAT (197 aa)).

As to quaternary structure, interacts with YWHAZ/14-3-3 protein zeta. Interacts with TRPV5 and TRPV6. According to PubMed:10978534, testis-specific. According to PubMed:16371431, broadly expressed.

It localises to the cytoplasm. Its subcellular location is the membrane. May regulate epithelial calcium transport by inhibiting TRPV5 activity. The protein is B box and SPRY domain-containing protein (Bspry) of Mus musculus (Mouse).